The primary structure comprises 191 residues: Acireductone dioxygenase 2 (191 aa).

Positions 102, 104, 108, and 146 each coordinate Fe(2+). 4 residues coordinate Ni(2+): histidine 102, histidine 104, glutamate 108, and histidine 146.

This sequence belongs to the acireductone dioxygenase (ARD) family. In terms of assembly, monomer. The cofactor is Fe(2+). Ni(2+) is required as a cofactor.

The catalysed reaction is 1,2-dihydroxy-5-(methylsulfanyl)pent-1-en-3-one + O2 = 3-(methylsulfanyl)propanoate + CO + formate + 2 H(+). It catalyses the reaction 1,2-dihydroxy-5-(methylsulfanyl)pent-1-en-3-one + O2 = 4-methylsulfanyl-2-oxobutanoate + formate + 2 H(+). The protein operates within amino-acid biosynthesis; L-methionine biosynthesis via salvage pathway; L-methionine from S-methyl-5-thio-alpha-D-ribose 1-phosphate: step 5/6. In terms of biological role, catalyzes 2 different reactions between oxygen and the acireductone 1,2-dihydroxy-3-keto-5-methylthiopentene (DHK-MTPene) depending upon the metal bound in the active site. Fe-containing acireductone dioxygenase (Fe-ARD) produces formate and 2-keto-4-methylthiobutyrate (KMTB), the alpha-ketoacid precursor of methionine in the methionine recycle pathway. Ni-containing acireductone dioxygenase (Ni-ARD) produces methylthiopropionate, carbon monoxide and formate, and does not lie on the methionine recycle pathway. This chain is Acireductone dioxygenase 2, found in Nocardia farcinica (strain IFM 10152).